The chain runs to 180 residues: Crossover junction endodeoxyribonuclease RuvC (180 aa).

Catalysis depends on residues D7, E66, and D138. Mg(2+)-binding residues include D7, E66, and D138.

It belongs to the RuvC family. As to quaternary structure, homodimer which binds Holliday junction (HJ) DNA. The HJ becomes 2-fold symmetrical on binding to RuvC with unstacked arms; it has a different conformation from HJ DNA in complex with RuvA. In the full resolvosome a probable DNA-RuvA(4)-RuvB(12)-RuvC(2) complex forms which resolves the HJ. The cofactor is Mg(2+).

It is found in the cytoplasm. It carries out the reaction Endonucleolytic cleavage at a junction such as a reciprocal single-stranded crossover between two homologous DNA duplexes (Holliday junction).. Its function is as follows. The RuvA-RuvB-RuvC complex processes Holliday junction (HJ) DNA during genetic recombination and DNA repair. Endonuclease that resolves HJ intermediates. Cleaves cruciform DNA by making single-stranded nicks across the HJ at symmetrical positions within the homologous arms, yielding a 5'-phosphate and a 3'-hydroxyl group; requires a central core of homology in the junction. The consensus cleavage sequence is 5'-(A/T)TT(C/G)-3'. Cleavage occurs on the 3'-side of the TT dinucleotide at the point of strand exchange. HJ branch migration catalyzed by RuvA-RuvB allows RuvC to scan DNA until it finds its consensus sequence, where it cleaves and resolves the cruciform DNA. This is Crossover junction endodeoxyribonuclease RuvC from Paraburkholderia phytofirmans (strain DSM 17436 / LMG 22146 / PsJN) (Burkholderia phytofirmans).